The primary structure comprises 345 residues: Anthranilate phosphoribosyltransferase (345 aa).

Residues G88, 91–92 (GD), T96, 98–101 (NIST), 116–124 (KHGNRSASG), and S128 contribute to the 5-phospho-alpha-D-ribose 1-diphosphate site. Residue G88 participates in anthranilate binding. A Mg(2+)-binding site is contributed by S100. N119 lines the anthranilate pocket. R174 contacts anthranilate. Mg(2+) is bound by residues D233 and E234.

It belongs to the anthranilate phosphoribosyltransferase family. As to quaternary structure, homodimer. Requires Mg(2+) as cofactor.

The catalysed reaction is N-(5-phospho-beta-D-ribosyl)anthranilate + diphosphate = 5-phospho-alpha-D-ribose 1-diphosphate + anthranilate. It participates in amino-acid biosynthesis; L-tryptophan biosynthesis; L-tryptophan from chorismate: step 2/5. Functionally, catalyzes the transfer of the phosphoribosyl group of 5-phosphorylribose-1-pyrophosphate (PRPP) to anthranilate to yield N-(5'-phosphoribosyl)-anthranilate (PRA). In Prochlorococcus marinus (strain NATL2A), this protein is Anthranilate phosphoribosyltransferase.